The chain runs to 187 residues: Adenylate kinase (187 aa).

Residue 10 to 15 participates in ATP binding; it reads GSGKGT. Residues 30-59 are NMP; the sequence is STGDLLRSEVVAGTPLGLQAKQVMAQGDLV. AMP contacts are provided by residues threonine 31, arginine 36, 57 to 59, 85 to 88, and glutamine 92; these read DLV and GYPR. The LID stretch occupies residues 126-136; it reads GRAQAEGREDD. Position 127 (arginine 127) interacts with ATP. Residues arginine 133 and arginine 144 each coordinate AMP. Glycine 172 provides a ligand contact to ATP.

Belongs to the adenylate kinase family. Monomer.

Its subcellular location is the cytoplasm. It catalyses the reaction AMP + ATP = 2 ADP. Its pathway is purine metabolism; AMP biosynthesis via salvage pathway; AMP from ADP: step 1/1. Catalyzes the reversible transfer of the terminal phosphate group between ATP and AMP. Plays an important role in cellular energy homeostasis and in adenine nucleotide metabolism. The polypeptide is Adenylate kinase (Xylella fastidiosa (strain M23)).